The following is a 3421-amino-acid chain: Large tegument protein deneddylase (3421 aa).

The tract at residues 1-248 (MAQTLVPANK…SETYLSDEQY (248 aa)) is deubiquitination activity. In terms of domain architecture, Peptidase C76 spans 19 to 238 (VVIGYRNQYD…ISATSLLYGI (220 aa)). Active-site residues include C39, D172, and H174. Residues 311–351 (QPTEKRVSLPKRRRPPWTPPTSSENLTTSGNTHTVAGRPSQ) form a disordered region. Residues 332-344 (SSENLTTSGNTHT) show a composition bias toward polar residues. The interval 482 to 508 (LEQFITMIFNRLLSFLVENGARTRTDS) is interaction with inner tegument protein. 2 disordered regions span residues 2407–2442 (ESNPFPFASHDSSQSLDVPSSPSSGSDKYEEDPTGI) and 2479–3195 (SNAM…RKNI). A compositionally biased stretch (low complexity) spans 2415 to 2432 (SHDSSQSLDVPSSPSSGS). 5 stretches are compositionally biased toward pro residues: residues 2506-2516 (TLPPKAAPLPP), 2541-2556 (PSVPAPPTLPPAPPLP), 2565-2577 (GPPPTLPPAPPLP), 2586-2598 (GPPPTLPPAPPLP), and 2607-2619 (GPPPTLPPAPPLP). 2 stretches are compositionally biased toward polar residues: residues 2620-2637 (QSTSKAASGATQSDSGKT) and 2778-2787 (SDSNVTQSTK). The segment covering 2797–2857 (PAAAPAKSAA…SAAAPAAAPA (61 aa)) has biased composition (low complexity). Basic and acidic residues predominate over residues 2869–2895 (KPAKDQAKDQAKDQAKDQAKDQAKDQA). Residues 2953–2969 (LSASKNSHTTDAVSSDR) show a composition bias toward polar residues. 2 stretches are compositionally biased toward basic and acidic residues: residues 3023–3040 (RKSDSRNNRQSDAWRRAF) and 3088–3097 (CSEEPKRPTG). A compositionally biased stretch (polar residues) spans 3120–3146 (IPQNQNTSESPRTTSLKSPTRTVQSSM). Residues 3171–3188 (PQPPPANQTPPPQEPPAP) show a composition bias toward pro residues.

It belongs to the herpesviridae large tegument protein family. As to quaternary structure, interacts with host CUL1 and CUL4A; these interactions inhibit the E3 ligase activity of cullins. Interacts with inner tegument protein. Interacts with capsid vertex specific component CVC2. Interacts with the major capsid protein/MCP.

It is found in the virion tegument. The protein localises to the host cytoplasm. The protein resides in the host nucleus. The catalysed reaction is Thiol-dependent hydrolysis of ester, thioester, amide, peptide and isopeptide bonds formed by the C-terminal Gly of ubiquitin (a 76-residue protein attached to proteins as an intracellular targeting signal).. Functionally, large tegument protein that plays multiple roles in the viral cycle. During viral entry, remains associated with the capsid while most of the tegument is detached and participates in the capsid transport toward the host nucleus. Plays a role in the routing of the capsid at the nuclear pore complex and subsequent uncoating. Within the host nucleus, acts as a deneddylase and promotes the degradation of nuclear CRLs (cullin-RING ubiquitin ligases) and thereby stabilizes nuclear CRL substrates, while cytoplasmic CRLs remain unaffected. These modifications prevent host cell cycle S-phase progression and create a favorable environment allowing efficient viral genome replication. Participates later in the secondary envelopment of capsids. Indeed, plays a linker role for the association of the outer viral tegument to the capsids together with the inner tegument protein. In Equus caballus (Horse), this protein is Large tegument protein deneddylase.